We begin with the raw amino-acid sequence, 88 residues long: Small ribosomal subunit protein uS17 (88 aa).

It belongs to the universal ribosomal protein uS17 family. Part of the 30S ribosomal subunit.

Functionally, one of the primary rRNA binding proteins, it binds specifically to the 5'-end of 16S ribosomal RNA. In Pseudomonas aeruginosa (strain LESB58), this protein is Small ribosomal subunit protein uS17.